Here is a 446-residue protein sequence, read N- to C-terminus: Sphingomyelinase phosphodiesterase C (446 aa).

Residues 1-26 (MKFRNNLTLYLIFIIVFTIYISLTIS) form the signal peptide. An N-linked (GlcNAc...) asparagine glycan is attached at Asn-6. Zn(2+) is bound by residues Asp-39 and His-41. Cys-56 and Cys-78 are disulfide-bonded. Residue Asp-107 coordinates Zn(2+). Residues Asn-118 and Asn-128 are each glycosylated (N-linked (GlcNAc...) asparagine). Position 148 (Asn-148) interacts with Zn(2+). N-linked (GlcNAc...) asparagine glycans are attached at residues Asn-178, Asn-217, Asn-229, and Asn-234. His-247, His-287, and His-289 together coordinate Zn(2+). Residues Asn-342 and Asn-357 are each glycosylated (N-linked (GlcNAc...) asparagine). A disulfide bridge connects residues Cys-429 and Cys-442.

Belongs to the acid sphingomyelinase family. The cofactor is Zn(2+).

The protein resides in the secreted. The chain is Sphingomyelinase phosphodiesterase C (sgmC) from Dictyostelium discoideum (Social amoeba).